The primary structure comprises 240 residues: tRNA (guanine-N(1)-)-methyltransferase (240 aa).

Residues Gly-111 and 130-135 each bind S-adenosyl-L-methionine; that span reads IGDYVI.

It belongs to the RNA methyltransferase TrmD family. In terms of assembly, homodimer.

It localises to the cytoplasm. It carries out the reaction guanosine(37) in tRNA + S-adenosyl-L-methionine = N(1)-methylguanosine(37) in tRNA + S-adenosyl-L-homocysteine + H(+). In terms of biological role, specifically methylates guanosine-37 in various tRNAs. The chain is tRNA (guanine-N(1)-)-methyltransferase from Mycoplasma capricolum subsp. capricolum (strain California kid / ATCC 27343 / NCTC 10154).